The chain runs to 275 residues: NH(3)-dependent NAD(+) synthetase (275 aa).

46-53 (GISGGQDS) is an ATP binding site. A Mg(2+)-binding site is contributed by aspartate 52. Arginine 140 contacts deamido-NAD(+). Residue threonine 160 participates in ATP binding. Glutamate 165 contributes to the Mg(2+) binding site. Lysine 173 and aspartate 180 together coordinate deamido-NAD(+). The ATP site is built by lysine 189 and threonine 211. Residue 260–261 (HK) coordinates deamido-NAD(+).

This sequence belongs to the NAD synthetase family. As to quaternary structure, homodimer.

It carries out the reaction deamido-NAD(+) + NH4(+) + ATP = AMP + diphosphate + NAD(+) + H(+). The protein operates within cofactor biosynthesis; NAD(+) biosynthesis; NAD(+) from deamido-NAD(+) (ammonia route): step 1/1. Catalyzes the ATP-dependent amidation of deamido-NAD to form NAD. Uses ammonia as a nitrogen source. The sequence is that of NH(3)-dependent NAD(+) synthetase from Salmonella paratyphi A (strain ATCC 9150 / SARB42).